The chain runs to 255 residues: Hydroxyacylglutathione hydrolase (255 aa).

Zn(2+)-binding residues include His-56, His-58, Asp-60, His-61, His-114, Asp-133, and His-171.

The protein belongs to the metallo-beta-lactamase superfamily. Glyoxalase II family. As to quaternary structure, monomer. It depends on Zn(2+) as a cofactor.

The enzyme catalyses an S-(2-hydroxyacyl)glutathione + H2O = a 2-hydroxy carboxylate + glutathione + H(+). It participates in secondary metabolite metabolism; methylglyoxal degradation; (R)-lactate from methylglyoxal: step 2/2. Its function is as follows. Thiolesterase that catalyzes the hydrolysis of S-D-lactoyl-glutathione to form glutathione and D-lactic acid. In Rhodopseudomonas palustris (strain BisA53), this protein is Hydroxyacylglutathione hydrolase.